The chain runs to 157 residues: C-type lectin 9a (157 aa).

The signal sequence occupies residues 1–23; it reads MGRFIFVSFGLLVVFLSLSGTGA. 3 disulfide bridges follow: Cys-27-Cys-38, Cys-55-Cys-151, and Cys-126-Cys-143. Positions 34-152 constitute a C-type lectin domain; that stretch reads YDQYCYKPFN…CQAKKPFVCK (119 aa).

This sequence belongs to the snaclec family. Heteromultimer; disulfide-linked. In terms of tissue distribution, expressed by the venom gland.

It is found in the secreted. Interferes with one step of hemostasis (modulation of platelet aggregation, or coagulation cascade, for example). The polypeptide is C-type lectin 9a (Crotalus adamanteus (Eastern diamondback rattlesnake)).